The sequence spans 3563 residues: D-lysergyl-peptide-synthetase subunit 1 (3563 aa).

The segment at 307 to 706 (SCSPRPNPQA…LGRKDDQVKI (400 aa)) is adenylation (A) domain 1. The Carrier 1 domain maps to 844 to 921 (EPKSDREKLL…EIVIVSTSAT (78 aa)). Serine 881 carries the post-translational modification O-(pantetheine 4'-phosphoryl)serine. The segment at 963 to 1354 (EDIYPCTHLQ…EHILTEIHSN (392 aa)) is condensation (C) domain 1. An adenylation (A) domain 2 region spans residues 1397 to 1804 (QEKCQAQPDA…RRKDAQVKIR (408 aa)). The region spanning 1944–2020 (PPSNATEHEI…KLALARGVTQ (77 aa)) is the Carrier 2 domain. The residue at position 1981 (serine 1981) is an O-(pantetheine 4'-phosphoryl)serine. The tract at residues 2067-2486 (ERIYPCSPIQ…ALPVLDEDQM (420 aa)) is condensation (C) domain 2. Residues 2511–2909 (QCIRCPDSPS…GRNDDQVKVR (399 aa)) form an adenylation (A) domain 3 region. The region spanning 3025-3104 (PPRTALEAEL…RFGSYRRAGA (80 aa)) is the Carrier 3 domain. Serine 3064 is modified (O-(pantetheine 4'-phosphoryl)serine). The interval 3166 to 3451 (LYFSKPMASE…VAKSTTWSSD (286 aa)) is cyclization (Cyc) domain.

It belongs to the NRP synthetase family.

Its pathway is alkaloid biosynthesis; ergot alkaloid biosynthesis. D-lysergyl-peptide-synthetase subunit 1; part of the gene cluster that mediates the biosynthesis of fungal ergot alkaloid. DmaW catalyzes the first step of ergot alkaloid biosynthesis by condensing dimethylallyl diphosphate (DMAP) and tryptophan to form 4-dimethylallyl-L-tryptophan. The second step is catalyzed by the methyltransferase easF that methylates 4-dimethylallyl-L-tryptophan in the presence of S-adenosyl-L-methionine, resulting in the formation of 4-dimethylallyl-L-abrine. The catalase easC and the FAD-dependent oxidoreductase easE then transform 4-dimethylallyl-L-abrine to chanoclavine-I which is further oxidized by easD in the presence of NAD(+), resulting in the formation of chanoclavine-I aldehyde. Agroclavine dehydrogenase easG then mediates the conversion of chanoclavine-I aldehyde to agroclavine via a non-enzymatic adduct reaction: the substrate is an iminium intermediate that is formed spontaneously from chanoclavine-I aldehyde in the presence of glutathione. The presence of easA is not required to complete this reaction. Further conversion of agroclavine to paspalic acid is a two-step process involving oxidation of agroclavine to elymoclavine and of elymoclavine to paspalic acid, the second step being performed by the elymoclavine oxidase cloA. Paspalic acid is then further converted to D-lysergic acid. Ergopeptines are assembled from D-lysergic acid and three different amino acids by the D-lysergyl-peptide-synthetases composed each of a monomudular and a trimodular nonribosomal peptide synthetase subunit. LpsB and lpsC encode the monomodular subunits responsible for D-lysergic acid activation and incorporation into the ergopeptine backbone. LpsA1 and A2 subunits encode the trimodular nonribosomal peptide synthetase assembling the tripeptide portion of ergopeptines. LpsA1 is responsible for formation of the major ergopeptine, ergotamine, and lpsA2 for alpha-ergocryptine, the minor ergopeptine of the total alkaloid mixture elaborated by C.purpurea. D-lysergyl-tripeptides are assembled by the nonribosomal peptide synthetases and released as N-(D-lysergyl-aminoacyl)-lactams. Cyclolization of the D-lysergyl-tripeptides is performed by the Fe(2+)/2-ketoglutarate-dependent dioxygenase easH which introduces a hydroxyl group into N-(D-lysergyl-aminoacyl)-lactam at alpha-C of the aminoacyl residue followed by spontaneous condensation with the terminal lactam carbonyl group. The protein is D-lysergyl-peptide-synthetase subunit 1 of Claviceps purpurea (Ergot fungus).